A 204-amino-acid polypeptide reads, in one-letter code: MSAQDKLIKPSHLITMDDIIREGNPTLRAVAKEVSLPLCDEDILLGEKMMQFLKHSQDPVMAEKLGLRAGVGLAAPQIDVSKRIIAVLVPNLPDKEGNPPKEAYSWQEVLYNPKIVSHSVQDAALSDGEGCLSVDRVVEGYVVRHARVTVDYYDKEGQQHRIKLKGYNAIVVQHEIDHINGILFYDRINAKNPFETKEELLILD.

The Fe cation site is built by cysteine 131 and histidine 174. Residue glutamate 175 is part of the active site. Histidine 178 is a binding site for Fe cation.

This sequence belongs to the polypeptide deformylase family. Requires Fe(2+) as cofactor.

It catalyses the reaction N-terminal N-formyl-L-methionyl-[peptide] + H2O = N-terminal L-methionyl-[peptide] + formate. Removes the formyl group from the N-terminal Met of newly synthesized proteins. Requires at least a dipeptide for an efficient rate of reaction. N-terminal L-methionine is a prerequisite for activity but the enzyme has broad specificity at other positions. The polypeptide is Peptide deformylase (Streptococcus pyogenes serotype M18 (strain MGAS8232)).